The sequence spans 137 residues: Urease subunit beta (137 aa).

A disordered region spans residues 113–137 (NGHPNAGVKNDEGKQNANKESGDNR).

Belongs to the urease beta subunit family. In terms of assembly, heterotrimer of UreA (gamma), UreB (beta) and UreC (alpha) subunits. Three heterotrimers associate to form the active enzyme.

The protein localises to the cytoplasm. The catalysed reaction is urea + 2 H2O + H(+) = hydrogencarbonate + 2 NH4(+). Its pathway is nitrogen metabolism; urea degradation; CO(2) and NH(3) from urea (urease route): step 1/1. This Staphylococcus carnosus (strain TM300) protein is Urease subunit beta.